Here is a 373-residue protein sequence, read N- to C-terminus: Alcohol dehydrogenase class-3 (373 aa).

Residue Ala-1 is modified to N-acetylalanine. Cys-44, His-66, Cys-96, Cys-99, Cys-102, Cys-110, and Cys-173 together coordinate Zn(2+).

The protein belongs to the zinc-containing alcohol dehydrogenase family. Class-III subfamily. Homodimer. The cofactor is Zn(2+).

It localises to the cytoplasm. It catalyses the reaction a primary alcohol + NAD(+) = an aldehyde + NADH + H(+). The catalysed reaction is a secondary alcohol + NAD(+) = a ketone + NADH + H(+). It carries out the reaction S-(hydroxymethyl)glutathione + NADP(+) = S-formylglutathione + NADPH + H(+). The enzyme catalyses S-(hydroxymethyl)glutathione + NAD(+) = S-formylglutathione + NADH + H(+). It catalyses the reaction S-nitrosoglutathione + NADH + H(+) = S-(hydroxysulfenamide)glutathione + NAD(+). Class-III ADH is remarkably ineffective in oxidizing ethanol, but it readily catalyzes the oxidation of long-chain primary alcohols and the oxidation of S-(hydroxymethyl) glutathione. Also acts as a S-nitroso-glutathione reductase by catalyzing the NADH-dependent reduction of S-nitrosoglutathione, thereby regulating protein S-nitrosylation. This Saara hardwickii (Indian spiny-tailed lizard) protein is Alcohol dehydrogenase class-3.